Consider the following 244-residue polypeptide: Glutathione S-transferase theta-2 (244 aa).

One can recognise a GST N-terminal domain in the interval 2–82; it reads GLELYLDLLS…YLSSKYQVAD (81 aa). Residues 40-41, 53-54, 66-67, and 104-107 each bind glutathione; these read HM, KV, ES, and DNIR. In terms of domain architecture, GST C-terminal spans 88 to 230; it reads DLQARAQVHE…AKKMLPVPPP (143 aa).

Belongs to the GST superfamily. Theta family. As to quaternary structure, homodimer. As to expression, in liver, highest expression found in central vein limiting plate hepatocytes. Also expressed in interlobular bile duct epithelial cells. In lung, expressed in club cells and ciliated cells of the bronchiolar epithelium and in type II alveolar cells of the lung parenchyma.

The protein localises to the cytoplasm. It localises to the cytosol. It is found in the nucleus. It carries out the reaction RX + glutathione = an S-substituted glutathione + a halide anion + H(+). Functionally, conjugation of reduced glutathione to a wide number of exogenous and endogenous hydrophobic electrophiles. The polypeptide is Glutathione S-transferase theta-2 (Mus musculus (Mouse)).